Consider the following 158-residue polypeptide: Cyclic pyranopterin monophosphate synthase (158 aa).

Substrate is bound by residues 75 to 77 and 113 to 114; these read LCH and ME. Residue D128 is part of the active site.

This sequence belongs to the MoaC family. Homohexamer; trimer of dimers.

The catalysed reaction is (8S)-3',8-cyclo-7,8-dihydroguanosine 5'-triphosphate = cyclic pyranopterin phosphate + diphosphate. It participates in cofactor biosynthesis; molybdopterin biosynthesis. Its function is as follows. Catalyzes the conversion of (8S)-3',8-cyclo-7,8-dihydroguanosine 5'-triphosphate to cyclic pyranopterin monophosphate (cPMP). The protein is Cyclic pyranopterin monophosphate synthase of Paraburkholderia phytofirmans (strain DSM 17436 / LMG 22146 / PsJN) (Burkholderia phytofirmans).